The following is a 162-amino-acid chain: Podoplanin (162 aa).

The first 22 residues, 1-22 (MWKVSALLFVLGSASLWVLAEG), serve as a signal peptide directing secretion. The segment at 23–57 (ASTGQPEDDTETTGLEGGVAMPGAEDDVVTPGTSE) is disordered. The Extracellular portion of the chain corresponds to 23–131 (ASTGQPEDDT…EKDGLSTVTL (109 aa)). 10 O-linked (GalNAc...) threonine glycosylation sites follow: threonine 25, threonine 32, threonine 34, threonine 35, threonine 52, threonine 55, threonine 65, threonine 66, threonine 76, and threonine 85. Residues 85–108 (TSESTVHAQEQSPSATASNVATSH) are compositionally biased toward polar residues. The interval 85 to 119 (TSESTVHAQEQSPSATASNVATSHSTEKVDGDTQT) is disordered. 2 O-linked (GalNAc...) serine glycosylation sites follow: serine 86 and serine 88. A glycan (O-linked (GalNAc...) threonine) is linked at threonine 89. O-linked (GalNAc...) serine glycans are attached at residues serine 96 and serine 98. An O-linked (GalNAc...) threonine glycan is attached at threonine 100. Serine 102 carries an O-linked (GalNAc...) serine glycan. Threonine 106 is a glycosylation site (O-linked (GalNAc...) threonine). O-linked (GalNAc...) serine glycans are attached at residues serine 107 and serine 109. Basic and acidic residues predominate over residues 109 to 119 (STEKVDGDTQT). Threonine 110, threonine 117, threonine 119, and threonine 120 each carry an O-linked (GalNAc...) threonine glycan. Residues 132 to 152 (VGIIVGVLLAIGFIGAIIVVV) form a helical membrane-spanning segment. The interval 133-137 (GIIVG) is requires for dimerization and lipid rafts association. Over 153-162 (MRKMSGRYSP) the chain is Cytoplasmic. The segment at 154–155 (RK) is requires for interaction with MSN and EZR.

It belongs to the podoplanin family. As to quaternary structure, homodimer. Interacts with CLEC1B; the interaction is independent of CLEC1B glycosylation and activates CLEC1B; the interaction is dependent of sialic acid on O-glycans. Interacts with CD9; this interaction is homophilic and attenuates platelet aggregation and pulmonary metastasis induced by PDPN. Interacts with LGALS8; the interaction is glycosylation-dependent; may participate in connection of the lymphatic endothelium to the surrounding extracellular matrix. Interacts with HSPA9. Interacts (via extracellular domain) with CD44; this interaction is required for PDPN-mediated directional migration and regulation of lamellipodia extension/stabilization during cell spreading and migration. Interacts (via cytoplasmic domain) with MSN and EZR; activates RHOA and promotes epithelial-mesenchymal transition. Interacts with CCL21; relocalized PDPN to the basolateral membrane. In terms of processing, extensively O-glycosylated. Contains sialic acid residues. O-glycosylation is necessary for platelet aggregation activity. Disialylated at Thr-52; sialic acid is critical for platelet-aggregating activity and for CLEC1B interaction. Post-translationally, the N-terminus is blocked. Cleaved by a metalloprotease within its extracellular (EC) domain, generating a membrane-bound C-terminal fragment (PCTF33) and an extracellular fragment. The resulting membrane-bound C-terminal fragment (PCTF33) is further processed between Val-150 and Val-151 by PSEN1/gamma-secretase generating the intracellular domain of podoplanin (PICD). In terms of tissue distribution, highly expressed in placenta, lung, skeletal muscle and brain. Weakly expressed in brain, kidney and liver. In placenta, expressed on the apical plasma membrane of endothelium. In lung, expressed in alveolar epithelium. Up-regulated in colorectal tumors and expressed in 25% of early oral squamous cell carcinomas.

It is found in the membrane. It localises to the cell projection. The protein localises to the lamellipodium membrane. Its subcellular location is the filopodium membrane. The protein resides in the microvillus membrane. It is found in the ruffle membrane. It localises to the membrane raft. The protein localises to the apical cell membrane. Its subcellular location is the basolateral cell membrane. The protein resides in the invadopodium. It is found in the cytoplasm. It localises to the cytosol. In terms of biological role, mediates effects on cell migration and adhesion through its different partners. During development plays a role in blood and lymphatic vessels separation by binding CLEC1B, triggering CLEC1B activation in platelets and leading to platelet activation and/or aggregation. Interaction with CD9, on the contrary, attenuates platelet aggregation induced by PDPN. Through MSN or EZR interaction promotes epithelial-mesenchymal transition (EMT) leading to ERZ phosphorylation and triggering RHOA activation leading to cell migration increase and invasiveness. Interaction with CD44 promotes directional cell migration in epithelial and tumor cells. In lymph nodes (LNs), controls fibroblastic reticular cells (FRCs) adhesion to the extracellular matrix (ECM) and contraction of the actomyosin by maintaining ERM proteins (EZR; MSN and RDX) and MYL9 activation through association with unknown transmembrane proteins. Engagement of CLEC1B by PDPN promotes FRCs relaxation by blocking lateral membrane interactions leading to reduction of ERM proteins (EZR; MSN and RDX) and MYL9 activation. Through binding with LGALS8 may participate in connection of the lymphatic endothelium to the surrounding extracellular matrix. In keratinocytes, induces changes in cell morphology showing an elongated shape, numerous membrane protrusions, major reorganization of the actin cytoskeleton, increased motility and decreased cell adhesion. Controls invadopodia stability and maturation leading to efficient degradation of the extracellular matrix (ECM) in tumor cells through modulation of RHOC activity in order to activate ROCK1/ROCK2 and LIMK1/LIMK2 and inactivation of CFL1. Required for normal lung cell proliferation and alveolus formation at birth. Does not function as a water channel or as a regulator of aquaporin-type water channels. Does not have any effect on folic acid or amino acid transport. This chain is Podoplanin, found in Homo sapiens (Human).